The sequence spans 74 residues: MKQDTHPDYHFITVVMTDGTTYKTRSTLGKEGDTLNLDIDPKTHPAWTGGGHQLLDRGGRVSRFNAKFGAFTRK.

This sequence belongs to the bacterial ribosomal protein bL31 family. Type A subfamily. Part of the 50S ribosomal subunit.

Functionally, binds the 23S rRNA. The protein is Large ribosomal subunit protein bL31 of Phenylobacterium zucineum (strain HLK1).